Consider the following 527-residue polypeptide: MQYSIKQVLSKASDKLNKIGISSSQLEARILLRYVINKPIEYLLINLDEQLNEVEIEAFEKLLERRLKHEPIAYIIGIKEFYSREFIVNKHVLIPRADTEVLVDVCVHKSSLRATKRSVAISGILSKIASSTPMASSRNDEYTKILELGTGSGCIAISLLCELPNARVVATDISLDAIEVARNNALKYHVTDRIQIIHSNWFENLGKQKFDVIVSNPPYISTDEKPEMALETLNHEPYIALFAEEDGLQAYRIIAENAKKFLKPNGKIVLEIGFKQEEAVTQIFLSNGYNIESVYKDLQGHSRVILFSPINLNRSYARRIGKSLSGLQQNLLDNELPKYLFSKEKLIDEKRKIFLEIGFGMGEHFINQAKMNPDALFIGVEVYLNGVANVLKLASEQNITNFLLFPNNLDFILNDLPNNSLDGIYILFPDPWIKNKQKKKRIFNKERLKILQDKLKDNGNLVFASDIENYFYEAIELIEQNSNFKIMNKNNYLKPHDNYVITKYHQKAIKANRIPRFIILQHVSGDH.

Positions Met1–Pro309 are hemK. The tract at residues Met1–Asn311 is RF MTase. S-adenosyl-L-methionine-binding positions include Gly149–Gly153, Asp172, Trp201, Asn216, Glu356, Glu381, Asn408, and Asp430. Asn216 to Tyr219 contributes to the substrate binding site. The tRNA (guanine-N(7)-)-methyltransferase stretch occupies residues Ile310–His527. The segment at Arg314–His527 is tRNA MTase. Asp430 is a catalytic residue. Positions 434 and 466 each coordinate substrate.

It in the C-terminal section; belongs to the class I-like SAM-binding methyltransferase superfamily. TrmB family. The protein in the N-terminal section; belongs to the protein N5-glutamine methyltransferase family. PrmC subfamily.

It carries out the reaction L-glutaminyl-[peptide chain release factor] + S-adenosyl-L-methionine = N(5)-methyl-L-glutaminyl-[peptide chain release factor] + S-adenosyl-L-homocysteine + H(+). The enzyme catalyses guanosine(46) in tRNA + S-adenosyl-L-methionine = N(7)-methylguanosine(46) in tRNA + S-adenosyl-L-homocysteine. In terms of biological role, methylates the class 1 translation termination release factors RF1/PrfA and RF2/PrfB on the glutamine residue of the universally conserved GGQ motif. Functionally, catalyzes the formation of N(7)-methylguanine at position 46 (m7G46) in tRNA. The chain is Bifunctional methyltransferase (prmC/trmB) from Rickettsia felis (strain ATCC VR-1525 / URRWXCal2) (Rickettsia azadi).